A 303-amino-acid chain; its full sequence is N-acetyl-D-glucosamine kinase (303 aa).

Residues 4–11 (GFDIGGTK) and 133–140 (GVGGGLIF) each bind ATP. The Zn(2+) site is built by histidine 157, cysteine 177, cysteine 179, and cysteine 184.

It belongs to the ROK (NagC/XylR) family. NagK subfamily.

The enzyme catalyses N-acetyl-D-glucosamine + ATP = N-acetyl-D-glucosamine 6-phosphate + ADP + H(+). It participates in cell wall biogenesis; peptidoglycan recycling. Catalyzes the phosphorylation of N-acetyl-D-glucosamine (GlcNAc) derived from cell-wall degradation, yielding GlcNAc-6-P. This is N-acetyl-D-glucosamine kinase from Escherichia coli O81 (strain ED1a).